The sequence spans 168 residues: RNA pyrophosphohydrolase (168 aa).

A Nudix hydrolase domain is found at P8–K160. The short motif at G47–S68 is the Nudix box element.

It belongs to the Nudix hydrolase family. RppH subfamily. A divalent metal cation is required as a cofactor.

Functionally, accelerates the degradation of transcripts by removing pyrophosphate from the 5'-end of triphosphorylated RNA, leading to a more labile monophosphorylated state that can stimulate subsequent ribonuclease cleavage. This chain is RNA pyrophosphohydrolase, found in Bradyrhizobium sp. (strain ORS 278).